The primary structure comprises 252 residues: Small ribosomal subunit protein uS2 (252 aa).

It belongs to the universal ribosomal protein uS2 family.

The protein is Small ribosomal subunit protein uS2 of Chlorobium phaeobacteroides (strain DSM 266 / SMG 266 / 2430).